Reading from the N-terminus, the 302-residue chain is Sulfate adenylyltransferase subunit 2 (302 aa).

This sequence belongs to the PAPS reductase family. CysD subfamily. Heterodimer composed of CysD, the smaller subunit, and CysN.

It carries out the reaction sulfate + ATP + H(+) = adenosine 5'-phosphosulfate + diphosphate. The protein operates within sulfur metabolism; hydrogen sulfide biosynthesis; sulfite from sulfate: step 1/3. In terms of biological role, with CysN forms the ATP sulfurylase (ATPS) that catalyzes the adenylation of sulfate producing adenosine 5'-phosphosulfate (APS) and diphosphate, the first enzymatic step in sulfur assimilation pathway. APS synthesis involves the formation of a high-energy phosphoric-sulfuric acid anhydride bond driven by GTP hydrolysis by CysN coupled to ATP hydrolysis by CysD. This is Sulfate adenylyltransferase subunit 2 from Escherichia coli O1:K1 / APEC.